The following is a 629-amino-acid chain: Protein EDS1B (629 aa).

Ser123 (nucleophile) is an active-site residue. Residues Asp187 and His317 each act as charge relay system in the active site.

Interacts (via N-terminus) with PAD4 and SAG101. Part of a nuclear complex made of EDS1, PAD4 and SAG101, that can be redirected to the cytoplasm in the presence of an extranuclear form of EDS1. Does not interact with itself or with EDS1.

Its subcellular location is the nucleus. The protein localises to the cytoplasm. Acts as a second functional copy of EDS1. Can mediate HRT-mediated resistance to turnip crinkle virus. This is Protein EDS1B (EDS1B) from Arabidopsis thaliana (Mouse-ear cress).